We begin with the raw amino-acid sequence, 705 residues long: Polyribonucleotide nucleotidyltransferase (705 aa).

Mg(2+) contacts are provided by Asp487 and Asp493. Residues 554 to 613 enclose the KH domain; sequence PKILTMTINPDKIRDVIGPSGKQINKIIEETGVKIDIEQDGTIFISSTDESGNQKAKKII. The S1 motif domain maps to 623–691; it reads GQLYLGKVKR…KQGRVNLSRK (69 aa).

It belongs to the polyribonucleotide nucleotidyltransferase family. Homodimer. Component of a possible RNA degradosome complex composed of rny, rnjA, rnjB, pnp, pfkA and eno (although rnjA and rnjB's presence is unclear). RNA helicase CshA may also be a member of this complex. The cofactor is Mg(2+).

It is found in the cytoplasm. It catalyses the reaction RNA(n+1) + phosphate = RNA(n) + a ribonucleoside 5'-diphosphate. Its function is as follows. Involved in mRNA degradation. Catalyzes the phosphorolysis of single-stranded polyribonucleotides processively in the 3'- to 5'-direction. Necessary for competence development in Bacillus subtilis. May be necessary for modification of the srfA transcript (stabilization or translation activation). Involved in processing precursor type I toxin-antitoxin RNAs antitoxin SR4 and SR5 RNAs to their mature forms. The sequence is that of Polyribonucleotide nucleotidyltransferase from Bacillus subtilis (strain 168).